Consider the following 232-residue polypeptide: 2-C-methyl-D-erythritol 4-phosphate cytidylyltransferase (232 aa).

This sequence belongs to the IspD/TarI cytidylyltransferase family. IspD subfamily.

The enzyme catalyses 2-C-methyl-D-erythritol 4-phosphate + CTP + H(+) = 4-CDP-2-C-methyl-D-erythritol + diphosphate. Its pathway is isoprenoid biosynthesis; isopentenyl diphosphate biosynthesis via DXP pathway; isopentenyl diphosphate from 1-deoxy-D-xylulose 5-phosphate: step 2/6. In terms of biological role, catalyzes the formation of 4-diphosphocytidyl-2-C-methyl-D-erythritol from CTP and 2-C-methyl-D-erythritol 4-phosphate (MEP). This chain is 2-C-methyl-D-erythritol 4-phosphate cytidylyltransferase, found in Deinococcus radiodurans (strain ATCC 13939 / DSM 20539 / JCM 16871 / CCUG 27074 / LMG 4051 / NBRC 15346 / NCIMB 9279 / VKM B-1422 / R1).